A 274-amino-acid polypeptide reads, in one-letter code: Large ribosomal subunit protein uL2 (274 aa).

The tract at residues Val-223–Asp-265 is disordered.

The protein belongs to the universal ribosomal protein uL2 family. As to quaternary structure, part of the 50S ribosomal subunit. Forms a bridge to the 30S subunit in the 70S ribosome.

In terms of biological role, one of the primary rRNA binding proteins. Required for association of the 30S and 50S subunits to form the 70S ribosome, for tRNA binding and peptide bond formation. It has been suggested to have peptidyltransferase activity; this is somewhat controversial. Makes several contacts with the 16S rRNA in the 70S ribosome. The protein is Large ribosomal subunit protein uL2 of Vibrio vulnificus (strain CMCP6).